We begin with the raw amino-acid sequence, 209 residues long: uncharacterized protein (209 aa).

The Nudix hydrolase domain occupies 1–167 (MRNSAGLFMI…LNTYASSNYG (167 aa)).

This is an uncharacterized protein from Orgyia pseudotsugata (Douglas-fir tussock moth).